Consider the following 357-residue polypeptide: ATP-dependent 6-phosphofructokinase (357 aa).

ATP-binding positions include Gly12, 80-81 (KG), and 107-110 (GDGS). Position 108 (Asp108) interacts with Mg(2+). Substrate-binding positions include 131-133 (TID), Arg168, 175-177 (MGR), Glu229, Arg272, and 278-281 (HIQR). The active-site Proton acceptor is Asp133.

Belongs to the phosphofructokinase type A (PFKA) family. Mixed-substrate PFK group III subfamily. Homodimer or homotetramer. Mg(2+) serves as cofactor.

It localises to the cytoplasm. The catalysed reaction is beta-D-fructose 6-phosphate + ATP = beta-D-fructose 1,6-bisphosphate + ADP + H(+). The protein operates within carbohydrate degradation; glycolysis; D-glyceraldehyde 3-phosphate and glycerone phosphate from D-glucose: step 3/4. Its activity is regulated as follows. Subject to allosteric activation by ADP and other diphosphonucleosides, and inhibition by phosphoenolpyruvate. Its function is as follows. Catalyzes the phosphorylation of D-fructose 6-phosphate to fructose 1,6-bisphosphate by ATP, the first committing step of glycolysis. In Trichormus variabilis (strain ATCC 29413 / PCC 7937) (Anabaena variabilis), this protein is ATP-dependent 6-phosphofructokinase.